Reading from the N-terminus, the 490-residue chain is B3 domain-containing protein LOC_Os12g40080 (490 aa).

A DNA-binding region (TF-B3 1) is located at residues 24-117 (GKSFIKVMIT…HFKVWIYDPS (94 aa)). The tract at residues 161–191 (SGHSKETSEINPANSPSWKPTERVPSSEELD) is disordered. A compositionally biased stretch (polar residues) spans 169 to 178 (EINPANSPSW). 2 consecutive DNA-binding regions (TF-B3) follow at residues 236 to 331 (FYIT…FHPL) and 389 to 487 (VAVM…IRKS).

It localises to the nucleus. The sequence is that of B3 domain-containing protein LOC_Os12g40080 from Oryza sativa subsp. japonica (Rice).